We begin with the raw amino-acid sequence, 165 residues long: Transcription antitermination protein NusB (165 aa).

Residues 1–20 (MSDVENGGEPRQPSVKPANQ) form a disordered region.

The protein belongs to the NusB family.

Its function is as follows. Involved in transcription antitermination. Required for transcription of ribosomal RNA (rRNA) genes. Binds specifically to the boxA antiterminator sequence of the ribosomal RNA (rrn) operons. The protein is Transcription antitermination protein NusB of Agrobacterium fabrum (strain C58 / ATCC 33970) (Agrobacterium tumefaciens (strain C58)).